The sequence spans 433 residues: Protein root UVB sensitive 2, chloroplastic (433 aa).

The protein belongs to the RUS1 family. Interacts (via the DUF647 domain) with RUS1 (via the DUF647 domain). As to expression, expressed throughout the plant, with a higher expression near the root apical meristem, in the cortex region of the root elongation zone, in lateral roots and emerging lateral roots. Not detected in extreme root apical meristem or root cap.

Its subcellular location is the plastid. Functionally, involved in a root UV-B sensing pathway and in the protection against the hypersensitivity to very low-fluence-rate (VLF) UV-B. RSU1 and RUS2 are probably both negative modulators of the same UV-B perception pathway, which when overstimulated in the roots causes a block to postgermination development. Required for polar auxin transport and to maintain the normal levels of PIN proteins in the root. This is Protein root UVB sensitive 2, chloroplastic from Arabidopsis thaliana (Mouse-ear cress).